We begin with the raw amino-acid sequence, 329 residues long: Probable allantoicase (329 aa).

This sequence belongs to the allantoicase family.

It carries out the reaction allantoate + H2O = (S)-ureidoglycolate + urea. It participates in nitrogen metabolism; (S)-allantoin degradation; (S)-ureidoglycolate from allantoate (aminidohydrolase route): step 1/1. The protein is Probable allantoicase of Nocardia farcinica (strain IFM 10152).